The primary structure comprises 208 residues: Proheparin-binding EGF-like growth factor (208 aa).

Positions 1 to 23 (MKLLPSVVLKLFLAAVFSALVTG) are cleaved as a signal peptide. The propeptide occupies 24-62 (ESLERLRRGLADGTSNLVSPTESTDQLLPPGGGRGREVL). Topologically, residues 24-161 (ESLERLRRGL…NRLYTYDHTT (138 aa)) are extracellular. Polar residues predominate over residues 37–49 (TSNLVSPTESTDQ). Disordered stretches follow at residues 37–57 (TSNL…GGGR) and 81–104 (QALA…LGKK). Threonine 85 carries O-linked (GalNAc...) threonine glycosylation. Residues 93-102 (KRKKKGKGLG) show a composition bias toward basic residues. Positions 104-144 (KRDPCLRKYKDFCIHGECKYVKELRAPSCICHPGYHGERCH) constitute an EGF-like domain. 3 disulfide bridges follow: cysteine 108–cysteine 121, cysteine 116–cysteine 132, and cysteine 134–cysteine 143. Residues 149–208 (PVKNRLYTYDHTTILAVVAVVLSSVCLLVIVGLLMFRYHRRGGYDVENEEKVKLGVTASH) constitute a propeptide, C-terminal. The chain crosses the membrane as a helical span at residues 162–182 (ILAVVAVVLSSVCLLVIVGLL). The Cytoplasmic segment spans residues 183 to 208 (MFRYHRRGGYDVENEEKVKLGVTASH).

In terms of assembly, interacts with FBLN1. Interacts with EGFR and ERBB4. Post-translationally, O-glycosylated. As to expression, macrophages, midbrain, cerebellum, hypothalamus, cerebral cortex, bulbourethral gland, lung, heart ventricle, kidney, skin, prostate, seminal vesicle, testis; at low levels in lymph node, thymus, spleen; not detected in pituitary, olfactory bulb, thyroid, duodenum, pancreas, liver, submaxillary gland.

The protein localises to the secreted. Its subcellular location is the extracellular space. It is found in the cell membrane. Growth factor that mediates its effects via EGFR, ERBB2 and ERBB4. Required for normal cardiac valve formation and normal heart function. Promotes smooth muscle cell proliferation. May be involved in macrophage-mediated cellular proliferation. It is mitogenic for fibroblasts, but not endothelial cells. It is able to bind EGF receptor/EGFR with higher affinity than EGF itself and is a far more potent mitogen for smooth muscle cells than EGF. Also acts as a diphtheria toxin receptor. The polypeptide is Proheparin-binding EGF-like growth factor (HBEGF) (Sus scrofa (Pig)).